The following is a 64-amino-acid chain: Conotoxin Pu3.5 (64 aa).

An N-terminal signal peptide occupies residues 1–16; it reads LGVLLTICLLLFPLTA. Residues 17 to 49 constitute a propeptide that is removed on maturation; sequence VPLDGDQPADQPAGRMQDDISSEQHPFFDPVKR. Intrachain disulfides connect Cys-50-Cys-63, Cys-51-Cys-58, and Cys-54-Cys-62.

Belongs to the conotoxin M superfamily. Expressed by the venom duct.

Its subcellular location is the secreted. This chain is Conotoxin Pu3.5, found in Conus pulicarius (Flea-bitten cone).